A 378-amino-acid chain; its full sequence is GTPase Obg (378 aa).

The 159-residue stretch at Met1–Leu159 folds into the Obg domain. An OBG-type G domain is found at Ala160 to Asp336. Residues Gly166 to Ser173, Phe191 to His195, Asp213 to Gly216, Asn288 to Asp291, and Ser317 to Leu319 each bind GTP. 2 residues coordinate Mg(2+): Ser173 and Thr193. The disordered stretch occupies residues Ala345–Glu378.

Belongs to the TRAFAC class OBG-HflX-like GTPase superfamily. OBG GTPase family. Monomer. Requires Mg(2+) as cofactor.

The protein resides in the cytoplasm. In terms of biological role, an essential GTPase which binds GTP, GDP and possibly (p)ppGpp with moderate affinity, with high nucleotide exchange rates and a fairly low GTP hydrolysis rate. Plays a role in control of the cell cycle, stress response, ribosome biogenesis and in those bacteria that undergo differentiation, in morphogenesis control. This Bordetella petrii (strain ATCC BAA-461 / DSM 12804 / CCUG 43448) protein is GTPase Obg.